Consider the following 55-residue polypeptide: Rubredoxin-1 (55 aa).

Residues 1–54 enclose the Rubredoxin-like domain; the sequence is MKKWQCVVCGLIYDEAKGWPEEGIEAGTRWEDVPEDWLCPDCGVGKLDFEMIEI. Fe cation is bound by residues cysteine 6, cysteine 9, cysteine 39, and cysteine 42.

The protein belongs to the rubredoxin family. Fe(3+) serves as cofactor.

The protein resides in the cytoplasm. It functions in the pathway hydrocarbon metabolism; alkane degradation. Functionally, involved in the hydrocarbon hydroxylating system, which transfers electrons from NADH to rubredoxin reductase and then through rubredoxin to alkane 1 monooxygenase. This Pseudomonas aeruginosa (strain ATCC 15692 / DSM 22644 / CIP 104116 / JCM 14847 / LMG 12228 / 1C / PRS 101 / PAO1) protein is Rubredoxin-1 (rubA1).